A 2309-amino-acid chain; its full sequence is Collagen alpha-4(VI) chain (2309 aa).

The N-terminal stretch at 1-22 is a signal peptide; it reads MGTWKTFWLIISLAAGLGFVKS. The tract at residues 21–1410 is nonhelical region; it reads KSQRIVCREA…TCCNMYAKCY (1390 aa). VWFA domains follow at residues 34 to 206, 235 to 413, 430 to 653, 634 to 811, 849 to 1018, and 1030 to 1199; these read DIVF…AQKL, DIVF…LQAL, DVVF…FQRV, DLVF…GNKL, DIYF…IRDI, and DIIF…EKEI. A glycan (N-linked (GlcNAc...) asparagine) is linked at Asn-188. N-linked (GlcNAc...) asparagine glycosylation occurs at Asn-754. Residue Asn-1114 is glycosylated (N-linked (GlcNAc...) asparagine). Residues 1411–1744 form a triple-helical region region; the sequence is GDDGIRGEPG…GKMGTKGSKG (334 aa). Positions 1414–1430 are enriched in basic and acidic residues; sequence GIRGEPGSRGEQGERGL. The interval 1414–1746 is disordered; the sequence is GIRGEPGSRG…MGTKGSKGLA (333 aa). The segment covering 1480-1489 has biased composition (gly residues); the sequence is GEEGVGGLDG. The short motif at 1527 to 1529 is the Cell attachment site element; it reads RGD. 2 stretches are compositionally biased toward low complexity: residues 1605–1621 and 1650–1669; these read PRGRQGPPGFFGQKGDP and PAGERGPRGQQGPRGQPGLF. The tract at residues 1745-2309 is nonhelical region; it reads LADRTPCEIV…EGECLNYVLK (565 aa). 2 VWFA domains span residues 1776-1957 and 1982-2187; these read EVVF…ASCT and DLVF…LNLL. Positions 2208 to 2210 match the Cell attachment site motif; it reads RGD. The interval 2262–2300 is disordered; the sequence is ALGSHGKDRADTEDIDQETPAKGRHLGPTHGPCPMGPEE.

It belongs to the type VI collagen family. In terms of assembly, trimers composed of three different chains: alpha-1(VI), alpha-2(VI), and alpha-3(VI) or alpha-4(VI) or alpha-5(VI) or alpha-6(VI). In terms of processing, prolines at the third position of the tripeptide repeating unit (G-X-Y) are hydroxylated in some or all of the chains. As to expression, in newborn, it is expressed in lung, kidney, brain, intestine, skin, sternum and, at weak level, calvaria. In adult, it is almost absent with some weak expression in ovary and very weak expression in spleen, lung, uterus and brain.

It localises to the secreted. The protein resides in the extracellular space. Its subcellular location is the extracellular matrix. Functionally, collagen VI acts as a cell-binding protein. This chain is Collagen alpha-4(VI) chain (Col6a4), found in Mus musculus (Mouse).